A 240-amino-acid polypeptide reads, in one-letter code: Uridylate kinase (240 aa).

K12–G15 provides a ligand contact to ATP. Residues G20–G25 are involved in allosteric activation by GTP. UMP is bound at residue G54. Residues G55 and R59 each coordinate ATP. Residues D74 and T135–T142 contribute to the UMP site. ATP is bound by residues N163, Y169, and D172.

The protein belongs to the UMP kinase family. As to quaternary structure, homohexamer.

The protein resides in the cytoplasm. The catalysed reaction is UMP + ATP = UDP + ADP. The protein operates within pyrimidine metabolism; CTP biosynthesis via de novo pathway; UDP from UMP (UMPK route): step 1/1. Its activity is regulated as follows. Allosterically activated by GTP. Inhibited by UTP. Catalyzes the reversible phosphorylation of UMP to UDP. This Ligilactobacillus salivarius (strain UCC118) (Lactobacillus salivarius) protein is Uridylate kinase.